Here is a 188-residue protein sequence, read N- to C-terminus: Elongation factor P (188 aa).

It belongs to the elongation factor P family.

Its subcellular location is the cytoplasm. It participates in protein biosynthesis; polypeptide chain elongation. In terms of biological role, involved in peptide bond synthesis. Stimulates efficient translation and peptide-bond synthesis on native or reconstituted 70S ribosomes in vitro. Probably functions indirectly by altering the affinity of the ribosome for aminoacyl-tRNA, thus increasing their reactivity as acceptors for peptidyl transferase. The chain is Elongation factor P from Rickettsia canadensis (strain McKiel).